We begin with the raw amino-acid sequence, 125 residues long: Glycoprotein hormones alpha chain (125 aa).

An N-terminal signal peptide occupies residues 1–30 (MVSAVTTMGCMKAAGVSLLLLYFLLNAADS). Disulfide bonds link cysteine 41/cysteine 64, cysteine 44/cysteine 93, cysteine 61/cysteine 114, cysteine 65/cysteine 116, and cysteine 92/cysteine 119. Residues asparagine 85 and asparagine 110 are each glycosylated (N-linked (GlcNAc...) asparagine).

Belongs to the glycoprotein hormones subunit alpha family. Heterodimer. Glycoprotein hormones are heterodimers composed of a common alpha chain described here and a unique beta chain which confers their biological specificity to the different hormones.

It localises to the secreted. In terms of biological role, shared alpha chain of heterodimeric glycoprotein hormones. These hormones bind specific receptors on target cells that in turn activate downstream signaling pathways. Involved in gametogenesis and steroidogenesis. The protein is Glycoprotein hormones alpha chain (cga) of Fundulus heteroclitus (Killifish).